We begin with the raw amino-acid sequence, 88 residues long: Small ribosomal subunit protein bS20 (88 aa).

Disordered stretches follow at residues 1–25 (MANS…KARR) and 61–88 (GVTK…ALGA).

This sequence belongs to the bacterial ribosomal protein bS20 family.

Functionally, binds directly to 16S ribosomal RNA. This is Small ribosomal subunit protein bS20 from Jannaschia sp. (strain CCS1).